We begin with the raw amino-acid sequence, 440 residues long: Doublesex- and mab-3-related transcription factor A2 (440 aa).

A DNA-binding region (DM) is located at residues 59–106; the sequence is CARCRNHGVVSALKGHKRYCRWKDCMCAKCTLIAERQRVMAAQVALRR. The interval 167 to 261 is disordered; that stretch reads PKTPLPGTVT…SPSSAASRQM (95 aa). Residues 199–213 are compositionally biased toward basic and acidic residues; the sequence is DMRHGSGSENGDRES. The segment covering 229–241 has biased composition (low complexity); sequence TPGSISPIGSDSG. Polar residues predominate over residues 251–261; the sequence is PSPSSAASRQM. The 36-residue stretch at 261–296 folds into the DMA domain; the sequence is MNAIDILTRVFPNHKRSVLELVLQGCGKNVVQAIEQ.

Belongs to the DMRT family. In terms of tissue distribution, restrictively expressed in brain and developing germ cells, especially in spermatogonia, spermatocytes, spermatids, and sperm cells, and in developing oocytes, including early perinucleolus stage oocyte, late yolk vesicle stage oocyte, and oil drop stage oocyte.

It is found in the nucleus. In terms of biological role, may be involved in sexual development. This is Doublesex- and mab-3-related transcription factor A2 (dmrta2) from Danio rerio (Zebrafish).